A 91-amino-acid polypeptide reads, in one-letter code: Soluble cytochrome b558 (91 aa).

The region spanning 8-88 (LPVFTLEQVA…LQRYLIGTLE (81 aa)) is the Cytochrome b5 heme-binding domain. Cys25 and Cys54 are disulfide-bonded. Positions 43 and 71 each coordinate heme.

The sequence is that of Soluble cytochrome b558 from Ectothiorhodospira shaposhnikovii (Ectothiorhodospira vacuolata).